A 168-amino-acid polypeptide reads, in one-letter code: Lipoprotein signal peptidase (168 aa).

A run of 4 helical transmembrane segments spans residues 15–35 (WLWL…VVMD), 47–67 (VLPF…SFLS), 75–95 (WLFT…MSKL), and 107–127 (ALII…GFVV). Active-site residues include aspartate 128 and aspartate 146. A helical membrane pass occupies residues 141 to 161 (AFNLADTTICIGAAMIILDGF).

This sequence belongs to the peptidase A8 family.

The protein localises to the cell inner membrane. It carries out the reaction Release of signal peptides from bacterial membrane prolipoproteins. Hydrolyzes -Xaa-Yaa-Zaa-|-(S,diacylglyceryl)Cys-, in which Xaa is hydrophobic (preferably Leu), and Yaa (Ala or Ser) and Zaa (Gly or Ala) have small, neutral side chains.. It functions in the pathway protein modification; lipoprotein biosynthesis (signal peptide cleavage). Its function is as follows. This protein specifically catalyzes the removal of signal peptides from prolipoproteins. The sequence is that of Lipoprotein signal peptidase from Vibrio campbellii (strain ATCC BAA-1116).